The chain runs to 389 residues: Glutamate 5-kinase (389 aa).

An ATP-binding site is contributed by Lys16. Substrate contacts are provided by Ser56, Asp143, and Asn155. 175 to 176 lines the ATP pocket; it reads SD. Residues 281–358 enclose the PUA domain; sequence AGELHVDDGA…AEIETILGYP (78 aa).

It belongs to the glutamate 5-kinase family.

The protein localises to the cytoplasm. It carries out the reaction L-glutamate + ATP = L-glutamyl 5-phosphate + ADP. It functions in the pathway amino-acid biosynthesis; L-proline biosynthesis; L-glutamate 5-semialdehyde from L-glutamate: step 1/2. In terms of biological role, catalyzes the transfer of a phosphate group to glutamate to form L-glutamate 5-phosphate. The chain is Glutamate 5-kinase from Rhizobium johnstonii (strain DSM 114642 / LMG 32736 / 3841) (Rhizobium leguminosarum bv. viciae).